Reading from the N-terminus, the 154-residue chain is MKTFSAKPAEVTKKWVIIDATGLVVGRLATLVAMRLRGKHLPTYTPHVDCGDNIIIINAAKVVLTGRKRDNKVYYHHTGFIGGIKERTAKSILEGRFPERVVEKAVERMIPRGPLGRVQMGNLRVYGGAEHPHEAQQPEPLDVAAMNRKNMRAA.

This sequence belongs to the universal ribosomal protein uL13 family. In terms of assembly, part of the 50S ribosomal subunit.

Functionally, this protein is one of the early assembly proteins of the 50S ribosomal subunit, although it is not seen to bind rRNA by itself. It is important during the early stages of 50S assembly. The protein is Large ribosomal subunit protein uL13 of Rhodopseudomonas palustris (strain BisB5).